We begin with the raw amino-acid sequence, 692 residues long: MALLLVSLLAFLGSGSGCHHWLCHCSNRVFLCQDSKVTEIPPDLPRNAIELRFVLTKLRVIPKGSFSGFGDLEKIEISQNDVLEVIEADVFSNLPNLHEIRIEKANNLLYINPEAFQNLPSLRYLLISNTGIKHLPAFHKIQSLQKVLLDIQDNINIHIIARNSFMGLSFESVILWLNKNGIQEIHNCAFNGTQLDELNLSDNNNLEELPDDVFQGASGPVVLDISRTKVYSLPNHGLENLKKLRARSTYRLKKLPSLDKFVMLIEASLTYPSHCCAFANWRRQTSELHPICNKSISRQDIDDMTQPGDQRVSLVDDEPSYGKGSDMLYSEFDYDLCNEFVDVTCSPKPDAFNPCEDIMGYNILRVLIWFISILAITGNTTVLVVLTTSQYKLTVPRFLMCNLAFADLCIGIYLLLIASVDIHTKSQYHNYAIDWQTGAGCDAAGFFTVFASELSVYTLAAITLERWHTITHAMQLECKVQLCHAASIMVLGWAFAFAAALFPIFGISSYMKVSICLPMDIDSPLSQLYVMALLVLNALAFVVICGCYTHIYLTVRNPNIVSSSRDTKIAKRMATLIFTDFLCMAPILFFAISASLKVPLITVSKAKILLVLFYPINSCANPFLYAIFTKNFRRDFFVLMSKFGCYEVQAQIYKTETSSITHNFHSRKNPCSSAPRVTNSYVLVPLNHSVQN.

Residues 1–17 form the signal peptide; the sequence is MALLLVSLLAFLGSGSG. Intrachain disulfides connect cysteine 18–cysteine 25 and cysteine 23–cysteine 32. One can recognise an LRRNT domain in the interval 18–46; the sequence is CHHWLCHCSNRVFLCQDSKVTEIPPDLPR. At 18-365 the chain is on the extracellular side; the sequence is CHHWLCHCSN…EDIMGYNILR (348 aa). LRR repeat units lie at residues 49 to 72, 73 to 97, 98 to 118, 119 to 143, 144 to 169, 170 to 192, 193 to 216, 217 to 240, and 241 to 259; these read IELR…FGDL, EKIE…LPNL, HEIR…AFQN, LPSL…KIQS, LQKV…MGLS, FESV…AFNG, TQLD…VFQG, ASGP…GLEN, and LKKL…PSLD. Asparagine 191 and asparagine 199 each carry an N-linked (GlcNAc...) asparagine glycan. Cystine bridges form between cysteine 275/cysteine 345, cysteine 276/cysteine 292, cysteine 276/cysteine 355, and cysteine 292/cysteine 337. Asparagine 293 carries an N-linked (GlcNAc...) asparagine glycan. Tyrosine 334 is modified (sulfotyrosine). Residues 366-386 form a helical membrane-spanning segment; sequence VLIWFISILAITGNTTVLVVL. The Cytoplasmic segment spans residues 387–397; that stretch reads TTSQYKLTVPR. Residues 398-420 form a helical membrane-spanning segment; that stretch reads FLMCNLAFADLCIGIYLLLIASV. Residues 421–442 lie on the Extracellular side of the membrane; the sequence is DIHTKSQYHNYAIDWQTGAGCD. Residues cysteine 441 and cysteine 516 are joined by a disulfide bond. Residues 443 to 464 traverse the membrane as a helical segment; the sequence is AAGFFTVFASELSVYTLAAITL. Topologically, residues 465–484 are cytoplasmic; it reads ERWHTITHAMQLECKVQLCH. Residues 485-507 form a helical membrane-spanning segment; that stretch reads AASIMVLGWAFAFAAALFPIFGI. The Extracellular portion of the chain corresponds to 508–527; it reads SSYMKVSICLPMDIDSPLSQ. Residues 528–549 traverse the membrane as a helical segment; sequence LYVMALLVLNALAFVVICGCYT. At 550 to 572 the chain is on the cytoplasmic side; it reads HIYLTVRNPNIVSSSRDTKIAKR. Residues 573–596 form a helical membrane-spanning segment; it reads MATLIFTDFLCMAPILFFAISASL. Over 597–607 the chain is Extracellular; it reads KVPLITVSKAK. The chain crosses the membrane as a helical span at residues 608–629; sequence ILLVLFYPINSCANPFLYAIFT. The Cytoplasmic segment spans residues 630–692; it reads KNFRRDFFVL…LVPLNHSVQN (63 aa).

This sequence belongs to the G-protein coupled receptor 1 family. FSH/LSH/TSH subfamily. As to quaternary structure, homotrimer. Functions as a homotrimer binding the FSH hormone heterodimer composed of CGA and FSHB. Interacts with ARRB2. Interacts with APPL2; interaction is independent of follicle stimulating hormone stimulation. In terms of processing, N-glycosylated; indirectly required for FSH-binding, possibly via a conformational change that allows high affinity binding of hormone. Post-translationally, sulfated.

Its subcellular location is the cell membrane. Functionally, g protein-coupled receptor for follitropin, the follicle-stimulating hormone. Through cAMP production activates the downstream PI3K-AKT and ERK1/ERK2 signaling pathways. This is Follicle-stimulating hormone receptor (Fshr) from Mus musculus (Mouse).